The primary structure comprises 509 residues: ATP synthase subunit alpha (509 aa).

ATP is bound at residue 169-176 (GDRQTGKT).

The protein belongs to the ATPase alpha/beta chains family. F-type ATPases have 2 components, CF(1) - the catalytic core - and CF(0) - the membrane proton channel. CF(1) has five subunits: alpha(3), beta(3), gamma(1), delta(1), epsilon(1). CF(0) has three main subunits: a(1), b(2) and c(9-12). The alpha and beta chains form an alternating ring which encloses part of the gamma chain. CF(1) is attached to CF(0) by a central stalk formed by the gamma and epsilon chains, while a peripheral stalk is formed by the delta and b chains.

It localises to the cell inner membrane. It catalyses the reaction ATP + H2O + 4 H(+)(in) = ADP + phosphate + 5 H(+)(out). Functionally, produces ATP from ADP in the presence of a proton gradient across the membrane. The alpha chain is a regulatory subunit. The chain is ATP synthase subunit alpha from Mesorhizobium japonicum (strain LMG 29417 / CECT 9101 / MAFF 303099) (Mesorhizobium loti (strain MAFF 303099)).